We begin with the raw amino-acid sequence, 388 residues long: Chorismate synthase (388 aa).

Positions 39 and 45 each coordinate NADP(+). FMN is bound by residues 130–132 (RSS), 251–252 (NA), alanine 296, 311–315 (KPIPT), and arginine 337.

Belongs to the chorismate synthase family. As to quaternary structure, homotetramer. Requires FMNH2 as cofactor.

The enzyme catalyses 5-O-(1-carboxyvinyl)-3-phosphoshikimate = chorismate + phosphate. The protein operates within metabolic intermediate biosynthesis; chorismate biosynthesis; chorismate from D-erythrose 4-phosphate and phosphoenolpyruvate: step 7/7. Its function is as follows. Catalyzes the anti-1,4-elimination of the C-3 phosphate and the C-6 proR hydrogen from 5-enolpyruvylshikimate-3-phosphate (EPSP) to yield chorismate, which is the branch point compound that serves as the starting substrate for the three terminal pathways of aromatic amino acid biosynthesis. This reaction introduces a second double bond into the aromatic ring system. This is Chorismate synthase from Streptococcus equi subsp. zooepidemicus (strain MGCS10565).